A 62-amino-acid polypeptide reads, in one-letter code: Short neurotoxin 1 (62 aa).

The tract at residues 1-20 (LECHNQQSSEPPTTTRCSGG) is disordered. 4 disulfide bridges follow: Cys-3/Cys-24, Cys-17/Cys-41, Cys-43/Cys-54, and Cys-55/Cys-60.

The protein belongs to the three-finger toxin family. Short-chain subfamily. Type I alpha-neurotoxin sub-subfamily. As to expression, expressed by the venom gland.

It localises to the secreted. In terms of biological role, binds to muscle nicotinic acetylcholine receptor (nAChR) and inhibit acetylcholine from binding to the receptor, thereby impairing neuromuscular transmission. The polypeptide is Short neurotoxin 1 (Naja mossambica (Mozambique spitting cobra)).